A 94-amino-acid polypeptide reads, in one-letter code: Large ribosomal subunit protein uL23cz (94 aa).

This sequence belongs to the universal ribosomal protein uL23 family. As to quaternary structure, part of the 50S ribosomal subunit.

The protein localises to the plastid. Its subcellular location is the chloroplast. Binds to 23S rRNA. In Agrostis stolonifera (Creeping bentgrass), this protein is Large ribosomal subunit protein uL23cz (rpl23-A).